Consider the following 270-residue polypeptide: Transmembrane protein 176B (270 aa).

4 consecutive transmembrane segments (helical) span residues 65-85, 95-115, 127-147, and 209-229; these read LALG…GVCL, ASGC…GAIV, ISSL…VLCV, and LFLA…GVGL. Residues Ser236, Ser245, Ser254, and Ser258 each carry the phosphoserine modification. The disordered stretch occupies residues 237 to 270; sequence SQPLNEEGSEKRLLGENSVPPSPSREQTSTAIVL. Polar residues predominate over residues 260–270; the sequence is SREQTSTAIVL.

It belongs to the TMEM176 family. Expressed in lung and dermal fibroblasts.

It localises to the nucleus membrane. Its function is as follows. May play a role in the process of maturation of dendritic cells. Required for the development of cerebellar granule cells. This Homo sapiens (Human) protein is Transmembrane protein 176B (TMEM176B).